A 266-amino-acid polypeptide reads, in one-letter code: Sesquipedalian-1 (266 aa).

In terms of domain architecture, PH spans P17–F113. A disordered region spans residues Q165 to A184. S183 carries the phosphoserine modification. Residues S191–V203 carry the F&amp;H motif.

Belongs to the sesquipedalian family. Forms homodimers and heterodimers with PHETA2. Interacts with OCRL and INPP5B. Interaction with OCRL may be important for endosomal morphology and function.

It is found in the early endosome. The protein localises to the recycling endosome. The protein resides in the golgi apparatus. Its subcellular location is the trans-Golgi network. It localises to the cytoplasmic vesicle. It is found in the clathrin-coated vesicle. Plays a role in endocytic trafficking. Required for receptor recycling from endosomes, both to the trans-Golgi network and the plasma membrane. The protein is Sesquipedalian-1 of Mus musculus (Mouse).